The following is a 229-amino-acid chain: Histone H1 (229 aa).

Disordered regions lie at residues 1 to 52 (MADT…SSHP) and 125 to 229 (APAL…RTRK). The span at 32–45 (KEKKKVIAAKKPKS) shows a compositional bias: basic residues. Positions 50–119 (SHPSFFEMIS…KVKNSFKLPS (70 aa)) constitute an H15 domain. The segment covering 125 to 138 (APALAKKPTIPKPK) has biased composition (low complexity). The span at 139–160 (VAAKPKTAKIGAKPKAKAKVAA) shows a compositional bias: basic residues. 2 stretches are compositionally biased toward low complexity: residues 161-177 (KTKA…PAAK) and 185-205 (KPKT…VASP). Over residues 206–229 (GKKKAVPVKKVKTVKSPAGKRTRK) the composition is skewed to basic residues.

Belongs to the histone H1/H5 family.

The protein resides in the nucleus. It localises to the chromosome. Histones H1 are necessary for the condensation of nucleosome chains into higher-order structures. In Euphorbia esula (Leafy spurge), this protein is Histone H1.